A 466-amino-acid chain; its full sequence is Glutamate--tRNA ligase 2 (466 aa).

Positions proline 9–glycine 19 match the 'HIGH' region motif. A 'KMSKS' region motif is present at residues lysine 236–arginine 240. An ATP-binding site is contributed by lysine 239.

The protein belongs to the class-I aminoacyl-tRNA synthetase family. Glutamate--tRNA ligase type 1 subfamily. Monomer.

It is found in the cytoplasm. It catalyses the reaction tRNA(Glu) + L-glutamate + ATP = L-glutamyl-tRNA(Glu) + AMP + diphosphate. Its function is as follows. Catalyzes the attachment of glutamate to tRNA(Glu) in a two-step reaction: glutamate is first activated by ATP to form Glu-AMP and then transferred to the acceptor end of tRNA(Glu). The polypeptide is Glutamate--tRNA ligase 2 (Anaplasma marginale (strain St. Maries)).